Consider the following 472-residue polypeptide: Siroheme synthase 1 (472 aa).

Residues 1–203 (MDYLPLFADL…GQLTEAENEL (203 aa)) form a precorrin-2 dehydrogenase /sirohydrochlorin ferrochelatase region. NAD(+) contacts are provided by residues 22 to 23 (EV) and 43 to 44 (QT). At Ser128 the chain carries Phosphoserine. Residues 215–472 (GEVALVGAGP…AISPSVVNLA (258 aa)) are uroporphyrinogen-III C-methyltransferase. S-adenosyl-L-methionine is bound at residue Pro224. Asp247 (proton acceptor) is an active-site residue. The Proton donor role is filled by Lys269. S-adenosyl-L-methionine contacts are provided by residues 300–302 (GGD), Ile305, 330–331 (TA), Met382, and Gly411.

It in the N-terminal section; belongs to the precorrin-2 dehydrogenase / sirohydrochlorin ferrochelatase family. This sequence in the C-terminal section; belongs to the precorrin methyltransferase family.

The enzyme catalyses uroporphyrinogen III + 2 S-adenosyl-L-methionine = precorrin-2 + 2 S-adenosyl-L-homocysteine + H(+). It catalyses the reaction precorrin-2 + NAD(+) = sirohydrochlorin + NADH + 2 H(+). It carries out the reaction siroheme + 2 H(+) = sirohydrochlorin + Fe(2+). It functions in the pathway cofactor biosynthesis; adenosylcobalamin biosynthesis; precorrin-2 from uroporphyrinogen III: step 1/1. It participates in cofactor biosynthesis; adenosylcobalamin biosynthesis; sirohydrochlorin from precorrin-2: step 1/1. Its pathway is porphyrin-containing compound metabolism; siroheme biosynthesis; precorrin-2 from uroporphyrinogen III: step 1/1. The protein operates within porphyrin-containing compound metabolism; siroheme biosynthesis; siroheme from sirohydrochlorin: step 1/1. It functions in the pathway porphyrin-containing compound metabolism; siroheme biosynthesis; sirohydrochlorin from precorrin-2: step 1/1. Multifunctional enzyme that catalyzes the SAM-dependent methylations of uroporphyrinogen III at position C-2 and C-7 to form precorrin-2 via precorrin-1. Then it catalyzes the NAD-dependent ring dehydrogenation of precorrin-2 to yield sirohydrochlorin. Finally, it catalyzes the ferrochelation of sirohydrochlorin to yield siroheme. This Yersinia pseudotuberculosis serotype I (strain IP32953) protein is Siroheme synthase 1.